The primary structure comprises 455 residues: Argininosuccinate lyase (455 aa).

The protein belongs to the lyase 1 family. Argininosuccinate lyase subfamily.

Its subcellular location is the cytoplasm. It carries out the reaction 2-(N(omega)-L-arginino)succinate = fumarate + L-arginine. It participates in amino-acid biosynthesis; L-arginine biosynthesis; L-arginine from L-ornithine and carbamoyl phosphate: step 3/3. In Roseiflexus sp. (strain RS-1), this protein is Argininosuccinate lyase.